A 624-amino-acid chain; its full sequence is Low affinity potassium transport system protein Kup (624 aa).

A run of 12 helical transmembrane segments spans residues 9–29, 49–69, 103–123, 137–157, 165–185, 213–233, 247–267, 276–296, 337–357, 365–385, 398–418, and 421–441; these read LPAI…TSPL, VFGF…IKYL, VIMG…TPAI, PQLD…LFMI, VGKL…GLGL, VSFI…ALYA, WFTV…ALLL, PFFL…AALA, IYIP…IVIV, LAAA…ILST, FVAL…TANL, and LLSG…VMTT.

The protein belongs to the HAK/KUP transporter (TC 2.A.72) family.

It localises to the cell inner membrane. The enzyme catalyses K(+)(in) + H(+)(in) = K(+)(out) + H(+)(out). Its function is as follows. Responsible for the low-affinity transport of potassium into the cell. Likely operates as a K(+):H(+) symporter. This chain is Low affinity potassium transport system protein Kup, found in Shigella dysenteriae serotype 1 (strain Sd197).